Reading from the N-terminus, the 595-residue chain is Phytoene desaturase (595 aa).

The signal sequence occupies residues 1 to 23 (MAETQRPRSAIIVGAGAGGIAVA). The helical transmembrane segment at 574–594 (SQRAFPLLVALMGVLYFLLFV) threads the bilayer.

It belongs to the carotenoid/retinoid oxidoreductase family. It depends on NAD(+) as a cofactor.

The protein localises to the membrane. The catalysed reaction is 15-cis-phytoene + A = all-trans-phytofluene + AH2. The enzyme catalyses all-trans-phytofluene + A = all-trans-zeta-carotene + AH2. It catalyses the reaction all-trans-zeta-carotene + A = all-trans-neurosporene + AH2. It carries out the reaction all-trans-neurosporene + A = all-trans-lycopene + AH2. The catalysed reaction is all-trans-lycopene + A = all-trans-3,4-didehydrolycopene + AH2. It participates in carotenoid biosynthesis; lycopene biosynthesis. Its function is as follows. Phytoene desaturase involved in the carotenoid biosynthesis pathway. Converts phytoene into 3,4-didehydrolycopene via the intermediates phytofluene, zeta-carotene, neurosporene and lycopene, by introducing up to five double bonds into phytoene. Is also able to desaturate 1-hydroxyneurosporene into 1-hydroxylycopene and 1-hydroxylycopene into 1-hydroxy-3,4-didehydrolycopene. Gamma-carotene and 1,19-dihydroxylycopene are not accepted as substrates. Neurosporaxanthin is synthesized from geranyl-geranyl pyrophosphate (GGPP) through several enzymatic activities. Phytoene synthase activity performed by the bifunctional enzyme al-2 first produces phytoene from geranyl-geranyl pyrophosphate (GGPP). The phytoene dehydrogenase al-1 then introduces 5 desaturations to lead to 3,4-didehydrolycopene via the intermediates phytofluene, zeta-carotene, neurosporene and lycopene. Al-2 cyclase activity then converts 3,4-didehydrolycopene into torulene. Al-2 can also convet lycopene into gamma-carotene which in turn is converted to beta-carotene by an additional al-2 cyclization reaction. Torulene is the substrate of the dioxidase cao-2 that breaks the molecule, removing five carbon atoms to yield beta-apo-4'-carotenal, whereas the aldehyde dehydrogenase ylo-1 mediates the last step by converting beta-apo-4'-carotenal into neurosporaxanthin. The chain is Phytoene desaturase from Neurospora crassa (strain ATCC 24698 / 74-OR23-1A / CBS 708.71 / DSM 1257 / FGSC 987).